The following is a 493-amino-acid chain: Cytochrome P450 2E1 (493 aa).

298-303 (FAGTET) lines the substrate pocket. Residue cysteine 437 coordinates heme.

Belongs to the cytochrome P450 family. Interacts with chaperones HSP70 and HSP90; this interaction is required for initial targeting to mitochondria. Heme is required as a cofactor.

The protein resides in the endoplasmic reticulum membrane. Its subcellular location is the microsome membrane. It is found in the mitochondrion inner membrane. The catalysed reaction is an organic molecule + reduced [NADPH--hemoprotein reductase] + O2 = an alcohol + oxidized [NADPH--hemoprotein reductase] + H2O + H(+). The enzyme catalyses (5Z,8Z,11Z)-eicosatrienoate + reduced [NADPH--hemoprotein reductase] + O2 = 19-hydroxy-(5Z,8Z,11Z)-eicosatrienoate + oxidized [NADPH--hemoprotein reductase] + H2O + H(+). It carries out the reaction (5Z,8Z,11Z,14Z,17Z)-eicosapentaenoate + reduced [NADPH--hemoprotein reductase] + O2 = 19-hydroxy-(5Z,8Z,11Z,14Z,17Z)-eicosapentaenoate + oxidized [NADPH--hemoprotein reductase] + H2O + H(+). It catalyses the reaction (4Z,7Z,10Z,13Z,16Z,19Z)-docosahexaenoate + reduced [NADPH--hemoprotein reductase] + O2 = 21-hydroxy-(4Z,7Z,10Z,13Z,16Z,19Z)-docosahexaenoate + oxidized [NADPH--hemoprotein reductase] + H2O + H(+). The catalysed reaction is dodecanoate + reduced [NADPH--hemoprotein reductase] + O2 = 11-hydroxydodecanoate + oxidized [NADPH--hemoprotein reductase] + H2O + H(+). The enzyme catalyses tetradecanoate + reduced [NADPH--hemoprotein reductase] + O2 = 13-hydroxytetradecanoate + oxidized [NADPH--hemoprotein reductase] + H2O + H(+). It carries out the reaction 4-nitrophenol + NADPH + O2 + H(+) = 4-nitrocatechol + NADP(+) + H2O. It participates in lipid metabolism; fatty acid metabolism. The omega-1 hydroxylase activity is stimulated by cytochrome b5. In terms of biological role, a cytochrome P450 monooxygenase involved in the metabolism of fatty acids. Mechanistically, uses molecular oxygen inserting one oxygen atom into a substrate, and reducing the second into a water molecule, with two electrons provided by NADPH via cytochrome P450 reductase (NADPH--hemoprotein reductase). Catalyzes the hydroxylation of carbon-hydrogen bonds. Hydroxylates fatty acids specifically at the omega-1 position displaying the highest catalytic activity for saturated fatty acids. May be involved in the oxidative metabolism of xenobiotics. The sequence is that of Cytochrome P450 2E1 from Homo sapiens (Human).